Here is a 225-residue protein sequence, read N- to C-terminus: Small ribosomal subunit protein uS3 (225 aa).

The KH type-2 domain maps to 16–85; sequence VCEYVVKETE…TPQIEVKDVK (70 aa). The interval 202 to 225 is disordered; the sequence is EVGTESKADQTDVEGRETGNAEES. Positions 205–225 are enriched in basic and acidic residues; that stretch reads TESKADQTDVEGRETGNAEES.

This sequence belongs to the universal ribosomal protein uS3 family. As to quaternary structure, part of the 30S ribosomal subunit.

Functionally, binds the lower part of the 30S subunit head. This Thermoplasma acidophilum (strain ATCC 25905 / DSM 1728 / JCM 9062 / NBRC 15155 / AMRC-C165) protein is Small ribosomal subunit protein uS3.